The following is a 222-amino-acid chain: Pre-mRNA cleavage factor Im 25 kDa subunit 1 (222 aa).

The 128-residue stretch at 67-194 folds into the Nudix hydrolase domain; it reads GLRTCVEAVL…KLLAVPLCQL (128 aa). The tract at residues 94–96 is interaction with RNA; sequence SIF. The short motif at 101–122 is the Nudix box element; the sequence is GRLRPGESDIEGLKRKLASKLS.

The protein belongs to the Nudix hydrolase family. CPSF5 subfamily. In terms of assembly, homodimer. Component of the cleavage factor Im (CFIm) complex. Forms a complex with cleavage and polyadenylation specificity factor (CPSF) subunits FIPS5.

Its subcellular location is the nucleus. Its function is as follows. Component of the cleavage factor Im (CFIm) complex that plays a key role in pre-mRNA 3'-processing. Involved in association with CPSF6 or CPSF7 in pre-MRNA 3'-end poly(A) site cleavage and poly(A) addition. NUDT21/CPSF5 binds to cleavage and polyadenylation RNA substrates. The homodimer mediates simultaneous sequence-specific recognition of two 5'-UGUA-3' elements within the pre-mRNA. Binds to, but does not hydrolyze mono- and di-adenosine nucleotides. May have a role in mRNA export. In Arabidopsis thaliana (Mouse-ear cress), this protein is Pre-mRNA cleavage factor Im 25 kDa subunit 1.